The chain runs to 427 residues: Tumor necrosis factor receptor superfamily member 16 (427 aa).

The N-terminal stretch at 1-31 (MRRAGAACSAMDRLRLLLLLLLLLGVSFGGA) is a signal peptide. The Extracellular portion of the chain corresponds to 32 to 254 (KETCSTGMYT…VVTRGTADNL (223 aa)). TNFR-Cys repeat units follow at residues 34–67 (TCSTGMYTHSGECCKACNLGEGVAQPCGANQTVC), 69–110 (PCLD…DAVC), 111–149 (RCSYGYYQDEETGRCEACSVCGVGSGLVFSCQDKQNTVC), and 151–191 (ECPE…DAEC). 12 disulfides stabilise this stretch: Cys-35-Cys-46, Cys-47-Cys-60, Cys-50-Cys-67, Cys-70-Cys-86, Cys-89-Cys-102, Cys-92-Cys-110, Cys-112-Cys-125, Cys-128-Cys-141, Cys-131-Cys-149, Cys-152-Cys-167, Cys-170-Cys-183, and Cys-173-Cys-191. An N-linked (GlcNAc...) asparagine glycan is attached at Asn-63. Positions 197–223 (RWITRSTPPEGSDVTTPSTQEPEAPPE) are disordered. Polar residues predominate over residues 200-217 (TRSTPPEGSDVTTPSTQE). Residues 255–275 (IPVYCSILAAVVVGLVAYIAF) traverse the membrane as a helical segment. Residues 276–427 (KRWNSCKQNK…CSESTATSPV (152 aa)) lie on the Cytoplasmic side of the membrane. 2 stretches are compositionally biased toward polar residues: residues 284 to 294 (NKQGANSRPVN) and 308 to 329 (SGISVDSQSLHDQQTHTQTASG). Residues 284–334 (NKQGANSRPVNQTPPPEGEKLHSDSGISVDSQSLHDQQTHTQTASGQALKG) are disordered. A Phosphoserine modification is found at Ser-314. The mediates interaction with KIDINS220 stretch occupies residues 329–344 (GQALKGDGNLYSSLPL). One can recognise a Death domain in the interval 356 to 421 (GDTWRHLAGE…DIVESLCSES (66 aa)).

Homodimer; disulfide-linked. Heterodimer with SORCS2. The extracellular domains of the heterodimer bind NGF. The cytoplasmic region of the heterodimer binds TRIO. NGF binding mediates dissociation of TRIO from the receptor complex. Interacts with TRAF2, TRAF4, TRAF6, PTPN13 and RANBP9. Interacts through TRAF6 with SQSTM1 which bridges NGFR to NTRK1. Interacts with BEX1. Interacts with BEX3. Interacts with KIDINS220 and NTRK1. Can form a ternary complex with NTRK1 and KIDINS220 and this complex is affected by the expression levels of KIDINS220. An increase in KIDINS220 expression leads to a decreased association of NGFR and NTRK1. Interacts (via death domain) with RAB31. Interacts with NTRK2; may regulate the ligand specificity of the NTRK2 receptor. Interacts with LINGO1. Interacts with NRADD. Interacts with MAGED1; the interaction antagonizes the association NGFR:NTRK1. Interacts with RTN4R. Interacts (via death domain) with ARHGDIA and RIPK2. Interacts with BFAR. As to quaternary structure, (Microbial infection) Binds to rabies virus glycoprotein Gs. In terms of processing, N-glycosylated. O-glycosylated. Post-translationally, phosphorylated on serine residues. Detected in Schwann cells. Detected in embryonic brain, in hippocampus neurons (at protein level). Detected in brain and spinal cord.

The protein localises to the cell membrane. The protein resides in the cytoplasm. It is found in the perikaryon. It localises to the cell projection. Its subcellular location is the growth cone. The protein localises to the dendritic spine. Functionally, low affinity neurotrophin receptor which can bind to mature NGF, BDNF, NTF3, and NTF4. Forms a heterodimeric receptor with SORCS2 that binds the precursor forms of NGF (proNGF), BDNF (proBDNF) and NTF3 (proNT3) with high affinity, and has much lower affinity for mature NGF and BDNF. Plays an important role in differentiation and survival of specific neuronal populations during development. Can mediate cell survival as well as cell death of neural cells. The heterodimeric receptor formed with SORCS2 plays a role in proBDNF-dependent synaptic plasticity, in hippocampal long term depression (LTD) and long term potentiation (LTP). Plays a role in the inactivation of RHOA. Plays a role in the regulation of the translocation of GLUT4 to the cell surface in adipocytes and skeletal muscle cells in response to insulin, probably by regulating RAB31 activity, and thereby contributes to the regulation of insulin-dependent glucose uptake. Necessary for the circadian oscillation of the clock genes BMAL1, PER1, PER2 and NR1D1 in the suprachiasmatic nucleus (SCN) of the brain and in liver and of the genes involved in glucose and lipid metabolism in the liver. (Microbial infection) Cell surface receptor for rabies virus glycoprotein Gs. Its function is as follows. Does not bind NGF, BDNF, NTF3, and NTF4. In Mus musculus (Mouse), this protein is Tumor necrosis factor receptor superfamily member 16 (Ngfr).